A 143-amino-acid chain; its full sequence is MFMGEYKHNMDSKGRIIIPAKFRSELGDKFVATRGLDHCLFVYPMHEWSKLEKKLTSLPITSKNARTFVRFFFSGATECEFDKQGRISIPSNLREYAELQKEVVIIGLANRIELWSSKRWGGYLDSAEESYEEIAAAMEDLGI.

2 consecutive SpoVT-AbrB domains span residues 5-47 and 76-119; these read EYKH…PMHE and ATEC…SSKR.

Belongs to the MraZ family. As to quaternary structure, forms oligomers.

Its subcellular location is the cytoplasm. It localises to the nucleoid. The sequence is that of Transcriptional regulator MraZ from Halothermothrix orenii (strain H 168 / OCM 544 / DSM 9562).